Consider the following 368-residue polypeptide: Cytochrome b-c1 complex subunit 2, mitochondrial (368 aa).

A mitochondrion-targeting transit peptide spans 1 to 16; it reads MLSAARLQFAQGSVRR. 2 positions are modified to phosphoserine: S141 and S168.

Belongs to the peptidase M16 family. UQCRC2/QCR2 subfamily. As to quaternary structure, component of the ubiquinol-cytochrome c oxidoreductase (cytochrome b-c1 complex, complex III, CIII), a multisubunit enzyme composed of 10 subunits. The complex is composed of 3 respiratory subunits cytochrome b (COB), cytochrome c1 (CYT1) and Rieske protein (RIP1), 2 core protein subunits COR1 and QCR2, and 5 low-molecular weight protein subunits QCR6, QCR7, QCR8, QCR9 and QCR10. The complex exists as an obligatory dimer and forms supercomplexes (SCs) in the inner mitochondrial membrane with a monomer or a dimer of cytochrome c oxidase (complex IV, CIV), resulting in 2 different assemblies (supercomplexes III(2)IV and III(2)IV(2)).

The protein resides in the mitochondrion inner membrane. Functionally, component of the ubiquinol-cytochrome c oxidoreductase, a multisubunit transmembrane complex that is part of the mitochondrial electron transport chain which drives oxidative phosphorylation. The respiratory chain contains 3 multisubunit complexes succinate dehydrogenase (complex II, CII), ubiquinol-cytochrome c oxidoreductase (cytochrome b-c1 complex, complex III, CIII) and cytochrome c oxidase (complex IV, CIV), that cooperate to transfer electrons derived from NADH and succinate to molecular oxygen, creating an electrochemical gradient over the inner membrane that drives transmembrane transport and the ATP synthase. The cytochrome b-c1 complex catalyzes electron transfer from ubiquinol to cytochrome c, linking this redox reaction to translocation of protons across the mitochondrial inner membrane, with protons being carried across the membrane as hydrogens on the quinol. In the process called Q cycle, 2 protons are consumed from the matrix, 4 protons are released into the intermembrane space and 2 electrons are passed to cytochrome c. This Saccharomyces cerevisiae (strain ATCC 204508 / S288c) (Baker's yeast) protein is Cytochrome b-c1 complex subunit 2, mitochondrial (QCR2).